A 345-amino-acid polypeptide reads, in one-letter code: 4-hydroxy-3-methylbut-2-en-1-yl diphosphate synthase (flavodoxin) (345 aa).

Residues Cys271, Cys274, Cys306, and Glu313 each coordinate [4Fe-4S] cluster.

It belongs to the IspG family. It depends on [4Fe-4S] cluster as a cofactor.

It carries out the reaction (2E)-4-hydroxy-3-methylbut-2-enyl diphosphate + oxidized [flavodoxin] + H2O + 2 H(+) = 2-C-methyl-D-erythritol 2,4-cyclic diphosphate + reduced [flavodoxin]. The protein operates within isoprenoid biosynthesis; isopentenyl diphosphate biosynthesis via DXP pathway; isopentenyl diphosphate from 1-deoxy-D-xylulose 5-phosphate: step 5/6. Its function is as follows. Converts 2C-methyl-D-erythritol 2,4-cyclodiphosphate (ME-2,4cPP) into 1-hydroxy-2-methyl-2-(E)-butenyl 4-diphosphate. This chain is 4-hydroxy-3-methylbut-2-en-1-yl diphosphate synthase (flavodoxin), found in Haemophilus influenzae (strain PittEE).